A 236-amino-acid chain; its full sequence is AENTVSFDFSKFLSGQENLILQGDTVTDDSNRCLVLTRENNGRPVQDSVGRVLYQTPIHLWDKQIDKEASFETSFTFFIYRENINRGGDGITFFLAPTDTQPKSGGGYLGIFKDAESNETVVAVEFDTFSNRWDPANSHIGINVNSVKSKITTPWGLKNDYFTVTITYDATRSLSVSSFYRNKPDDIFTVKASVHLRDALPQWVRIGLSAATGDLVEQHRLYSWSFKSVLPLDSST.

An N-linked (GlcNAc...) asparagine glycan is attached at asparagine 118.

The protein belongs to the leguminous lectin family. In terms of assembly, homodimer of noncovalently associated chains.

D-mannose and D-glucose specific lectin. The polypeptide is Lectin (Onobrychis viciifolia (Common sainfoin)).